Consider the following 237-residue polypeptide: Sugar fermentation stimulation protein homolog (237 aa).

The protein belongs to the SfsA family.

The polypeptide is Sugar fermentation stimulation protein homolog (Pseudomonas fluorescens (strain ATCC BAA-477 / NRRL B-23932 / Pf-5)).